The sequence spans 449 residues: UDP-N-acetylmuramate--L-alanine ligase (449 aa).

121–127 (GAHGKSS) contributes to the ATP binding site.

This sequence belongs to the MurCDEF family.

The protein localises to the cytoplasm. It carries out the reaction UDP-N-acetyl-alpha-D-muramate + L-alanine + ATP = UDP-N-acetyl-alpha-D-muramoyl-L-alanine + ADP + phosphate + H(+). The protein operates within cell wall biogenesis; peptidoglycan biosynthesis. In terms of biological role, cell wall formation. This Helicobacter pylori (strain HPAG1) protein is UDP-N-acetylmuramate--L-alanine ligase.